The sequence spans 446 residues: N-succinylarginine dihydrolase (446 aa).

Substrate is bound by residues 19–28, Asn110, and 137–138; these read AGLSFGNVAS and HR. Residue Glu174 is part of the active site. Arg213 is a binding site for substrate. Residue His249 is part of the active site. Asp251 and Asn364 together coordinate substrate. The active-site Nucleophile is Cys370.

It belongs to the succinylarginine dihydrolase family. In terms of assembly, homodimer.

It catalyses the reaction N(2)-succinyl-L-arginine + 2 H2O + 2 H(+) = N(2)-succinyl-L-ornithine + 2 NH4(+) + CO2. The protein operates within amino-acid degradation; L-arginine degradation via AST pathway; L-glutamate and succinate from L-arginine: step 2/5. In terms of biological role, catalyzes the hydrolysis of N(2)-succinylarginine into N(2)-succinylornithine, ammonia and CO(2). In Paraburkholderia xenovorans (strain LB400), this protein is N-succinylarginine dihydrolase.